Reading from the N-terminus, the 132-residue chain is Anti-sigma-E factor RseA (132 aa).

Phosphothreonine; by PknB is present on T36. Zn(2+) is bound by residues H63, C67, and C70. Residues 106–132 (RTPEVTPDVSEQAKFADDPTRGRRKRR) form a disordered region.

The protein belongs to the zinc-associated anti-sigma factor (ZAS) superfamily. As to quaternary structure, interacts with ECF RNA polymerase sigma factor SigE, interaction is abrogated by treatment of cells with H(2)O(2), detergent or vancomycin (the latter 2 cause surface stress). This probably inhibits the interaction of SigE with the RNA polymerase catalytic core. Requires Zn(2+) as cofactor. Post-translationally, phosphorylated by PknB on Thr-36; can be dephosphorylated (at least in vitro) by PstP. Phosphorylation is the signal for subsequent degradation by the ClpC1-ClpP2 complex. Degraded following vancomycin treatment (surface stress) by a ClpC1-ClpP2 complex.

The protein resides in the cytoplasm. Functionally, an anti-sigma factor for extracytoplasmic function (ECF) sigma factor SigE. ECF sigma factors are held in an inactive form by an anti-sigma factor. The polypeptide is Anti-sigma-E factor RseA (rseA) (Mycolicibacterium smegmatis (strain ATCC 700084 / mc(2)155) (Mycobacterium smegmatis)).